A 533-amino-acid polypeptide reads, in one-letter code: MKLLAFRRLLRIQRVVIRYRLDDLILELPMLPWWLRLLGATLPWRWLPRRKLELTRGARLRLALQDLGPIFIKFGQILSTRRDLLPDDIANELAWLQDKVPPFPPELAVKRIEEQLGAKIEQVFARFEREPLASASVAQVHAARLKSGEEVVVKVIRPNLEPVIRSDIAWLFILARLAERVSSEARRLHPVEVVSDYEKTIVDELDLLREAANASQLRRNFEGSPLLYVPQVYWDWCRPKVLVMERIYGIPVTDLETLRDQRTDFKALAERGVEIFFTQVFRDSFFHADMHPGNIFVSTRAPWSPQYIAVDCGIVGSLTDEDQDYLARNLIAFFKRDYRKVAQLHIDSGWVPAETKVNDFEAAIRTVCEPIFEKPLKDISFGQVLLRLFQTARRFNMEIQPQLVLLQKTLLNIEGLGRQLYPELDLWATAQPFLERWMRERVSPKQLLRNFQQQVEQVPHLSQMARDTLERLSQPHAHNAPPPEWKGSRHDWLGRLVGAVLLVGAAEVGLGQQLEAWPAWVMLAGGVFLILRR.

A helical transmembrane segment spans residues L24–W44. Positions R126–G494 constitute a Protein kinase domain. ATP is bound by residues L132–V140 and K154. The Proton acceptor role is filled by D289. Residues L510–I530 traverse the membrane as a helical segment.

Belongs to the ABC1 family. UbiB subfamily.

It is found in the cell inner membrane. Its pathway is cofactor biosynthesis; ubiquinone biosynthesis [regulation]. In terms of biological role, is probably a protein kinase regulator of UbiI activity which is involved in aerobic coenzyme Q (ubiquinone) biosynthesis. The protein is Probable protein kinase UbiB of Pseudomonas aeruginosa (strain UCBPP-PA14).